The primary structure comprises 382 residues: Sphingoid long-chain base transporter RSB1 (382 aa).

At 1–34 the chain is on the extracellular side; sequence MSNATNNTLGSLLPQLEAAANSNSLYGGMVPNLR. N-linked (GlcNAc...) asparagine glycosylation is found at asparagine 3 and asparagine 6. The helical transmembrane segment at 35-55 threads the bilayer; sequence FNITMIVIWGILLTIHVVQLL. Topologically, residues 56 to 57 are cytoplasmic; that stretch reads MR. A helical transmembrane segment spans residues 58–78; the sequence is QYWFSIAFICTGILEVLGFIG. Over 79 to 90 the chain is Extracellular; sequence RTWSHSNVADMD. The chain crosses the membrane as a helical span at residues 91–111; sequence AFLLNMICLTIAPVFTMGGIY. Residues 112-135 lie on the Cytoplasmic side of the membrane; that stretch reads YQLAKLIEVYGHRFSLLPSPMAYS. Residues 136–156 form a helical membrane-spanning segment; that stretch reads FIFICSDIVSLVVQAVGGGLC. At 157–171 the chain is on the extracellular side; the sequence is GVAVTDGTSTTTGNH. Residues 172 to 192 traverse the membrane as a helical segment; sequence VFIAGLAIQVASMAIFLMLWF. Residues 193 to 241 are Cytoplasmic-facing; it reads HFLFRIYISVRWEHINSRPISLSLLKISQTEVDYLYREKFHFLRLEPKR. Residues 242–262 traverse the membrane as a helical segment; the sequence is WVFHYFNLAMTVAVLTIFTRC. Over 263-281 the chain is Extracellular; that stretch reads CYRLAELVVGWDGYLITHE. A helical membrane pass occupies residues 282–302; that stretch reads WYFIILDALMMAIATVTLTIF. Topologically, residues 303 to 382 are cytoplasmic; that stretch reads HPGFAFKGRS…LFSSKKKAKL (80 aa).

It belongs to the lipid-translocating exporter (LTE) (TC 9.A.26.1) family.

Its subcellular location is the cell membrane. Catalyzes the ATP-dependent translocation of sphingoid long-chain bases (LCBs) from the cytoplasmic site toward the extracytoplasmic side of the membrane (flip-flop). Involved in the establishment of the functional lipid asymmetry of the plasma membrane. Regulates intracellular levels of LCBs, sphingolipid precursors that are growth inhibitory at increased levels. The polypeptide is Sphingoid long-chain base transporter RSB1 (RSB1) (Saccharomyces cerevisiae (strain AWRI1631) (Baker's yeast)).